We begin with the raw amino-acid sequence, 329 residues long: DNA-directed RNA polymerase subunit alpha (329 aa).

The interval Met1–Arg234 is alpha N-terminal domain (alpha-NTD). Residues Phe248–Asp329 form an alpha C-terminal domain (alpha-CTD) region.

Belongs to the RNA polymerase alpha chain family. Homodimer. The RNAP catalytic core consists of 2 alpha, 1 beta, 1 beta' and 1 omega subunit. When a sigma factor is associated with the core the holoenzyme is formed, which can initiate transcription.

The enzyme catalyses RNA(n) + a ribonucleoside 5'-triphosphate = RNA(n+1) + diphosphate. Functionally, DNA-dependent RNA polymerase catalyzes the transcription of DNA into RNA using the four ribonucleoside triphosphates as substrates. The sequence is that of DNA-directed RNA polymerase subunit alpha from Idiomarina loihiensis (strain ATCC BAA-735 / DSM 15497 / L2-TR).